The primary structure comprises 454 residues: MEDYLQDCRAALQDSRPLHVVLGNEACDLDSMVSALALAFYLTKTSEAEDIFIPVLNIKRSELPLRGDNVFFLQEVKIPEPALIFRDEIDLLALHQAGQLTLILVDHHILPKSDAALEEAVAEVLDHRPIEQKYCPPCHVSVELVGSCATLVTERILQGAPETLDRQTAALLHGTIILDCVNMDTNIGKATPKDSKYVEELEALFPDLPKRKDIFDSLQKAKFDVSGLTTEQMLRKDQKTVYRQGTKVAISAIYMDLKAFLQRTDLFTDLSSFCHDHSYDALVAMTIFFNTQNEPVRQLAIFCPHEALRMTICGILERSTSPPLKLTPIPSTSPNLQAYHQGNTQVSRKKLLPVLQEALSAYLDSAKMASGQSEVAVGMSREQVDKDLDKASNSLISGLSQDEEDPPLPPTPMNSLVDECPLDQGLPKFSAEAVFEKCSQISLSQSARACTSNK.

M1 is subject to N-acetylmethionine. Mn(2+)-binding residues include D28, D30, D106, and D179. The short motif at 106–108 (DHH) is the DHH motif element. Residues 394-421 (SLISGLSQDEEDPPLPPTPMNSLVDECP) are essential for homodimerization. Positions 397–420 (SGLSQDEEDPPLPPTPMNSLVDEC) are disordered. S400 is modified (phosphoserine). The residue at position 411 (T411) is a Phosphothreonine. A Phosphoserine modification is found at S415.

The protein belongs to the PPase class C family. Prune subfamily. Homooligomer. Able to homodimerize via its C-terminal domain. Interacts with NME1. Interacts with GSK3; at focal adhesion complexes where paxillin and vinculin are colocalized. Interacts with alpha and beta tubulin. Mn(2+) serves as cofactor.

The protein resides in the cytoplasm. Its subcellular location is the nucleus. The protein localises to the cell junction. It localises to the focal adhesion. It carries out the reaction diphosphate + H2O = 2 phosphate + H(+). Its activity is regulated as follows. Activated by magnesium ions and inhibited by manganese ions. Inhibited by dipyridamole, moderately sensitive to IBMX and inhibited by vinpocetine. Functionally, phosphodiesterase (PDE) that has higher activity toward cAMP than cGMP, as substrate. Plays a role in cell proliferation, migration and differentiation, and acts as a negative regulator of NME1. Plays a role in the regulation of neurogenesis. Involved in the regulation of microtubule polymerization. In Mus musculus (Mouse), this protein is Exopolyphosphatase PRUNE1 (Prune1).